The following is a 152-amino-acid chain: UPF0266 membrane protein CKO_01158 (152 aa).

3 helical membrane-spanning segments follow: residues 6 to 26 (LVLV…QFIM), 45 to 65 (VDSV…VTSH), and 67 to 87 (AQIT…IFWV).

It belongs to the UPF0266 family.

Its subcellular location is the cell inner membrane. This is UPF0266 membrane protein CKO_01158 from Citrobacter koseri (strain ATCC BAA-895 / CDC 4225-83 / SGSC4696).